Here is a 387-residue protein sequence, read N- to C-terminus: F420-dependent formate dehydrogenase 1 subunit beta (387 aa).

2 consecutive 4Fe-4S ferredoxin-type domains span residues 275–298 and 326–355; these read TIEE…VCPV and VRMS…ARIF. Positions 286, 289, 292, 296, 335, 338, 341, and 345 each coordinate [4Fe-4S] cluster. The disordered stretch occupies residues 366–387; that stretch reads LGYRPGVDDEAPPALGGSCPTQ.

It belongs to the FrhB family. In terms of assembly, dimer of an alpha (FdhA1) and a beta (FdhB1) subunit. It depends on [4Fe-4S] cluster as a cofactor. The cofactor is FAD. Zn(2+) is required as a cofactor.

It catalyses the reaction oxidized coenzyme F420-(gamma-L-Glu)(n) + formate + 2 H(+) = reduced coenzyme F420-(gamma-L-Glu)(n) + CO2. Its function is as follows. Catalyzes the oxidation of formate to carbon dioxide, with coenzyme F420 as the electron acceptor. In vitro can also use methyl viologen as electron acceptor. The protein is F420-dependent formate dehydrogenase 1 subunit beta of Methanococcus maripaludis (strain DSM 14266 / JCM 13030 / NBRC 101832 / S2 / LL).